The following is a 508-amino-acid chain: 2,3-bisphosphoglycerate-independent phosphoglycerate mutase (508 aa).

Residues aspartate 13 and serine 63 each contribute to the Mn(2+) site. The Phosphoserine intermediate role is filled by serine 63. Residues histidine 122, 152–153, arginine 184, arginine 190, 256–259, and lysine 330 contribute to the substrate site; these read RD and RADR. Residues aspartate 397, histidine 401, aspartate 438, histidine 439, and histidine 457 each contribute to the Mn(2+) site.

This sequence belongs to the BPG-independent phosphoglycerate mutase family. In terms of assembly, monomer. Mn(2+) is required as a cofactor.

The enzyme catalyses (2R)-2-phosphoglycerate = (2R)-3-phosphoglycerate. It functions in the pathway carbohydrate degradation; glycolysis; pyruvate from D-glyceraldehyde 3-phosphate: step 3/5. Functionally, catalyzes the interconversion of 2-phosphoglycerate and 3-phosphoglycerate. In Laribacter hongkongensis (strain HLHK9), this protein is 2,3-bisphosphoglycerate-independent phosphoglycerate mutase.